The chain runs to 60 residues: UPF0434 protein Spro_1718 (60 aa).

The protein belongs to the UPF0434 family.

In Serratia proteamaculans (strain 568), this protein is UPF0434 protein Spro_1718.